Here is a 446-residue protein sequence, read N- to C-terminus: Phosphoglucosamine mutase (446 aa).

Serine 100 functions as the Phosphoserine intermediate in the catalytic mechanism. Mg(2+)-binding residues include serine 100, aspartate 239, aspartate 241, and aspartate 243. Position 100 is a phosphoserine (serine 100).

Belongs to the phosphohexose mutase family. Mg(2+) serves as cofactor. Activated by phosphorylation.

The catalysed reaction is alpha-D-glucosamine 1-phosphate = D-glucosamine 6-phosphate. In terms of biological role, catalyzes the conversion of glucosamine-6-phosphate to glucosamine-1-phosphate. The protein is Phosphoglucosamine mutase of Oceanobacillus iheyensis (strain DSM 14371 / CIP 107618 / JCM 11309 / KCTC 3954 / HTE831).